The sequence spans 129 residues: Snaclec rhodocetin subunit beta (129 aa).

The C-type lectin domain maps to 3–125 (RCPTTWSASK…EEKNAFLCKF (123 aa)). Intrachain disulfides connect Cys-4–Cys-15, Cys-32–Cys-123, and Cys-98–Cys-115.

In terms of assembly, heterotetramer of subunit alpha, beta, gamma and delta; only the gamma and the delta subunits are disulfide-linked. Alpha-beta heterodimer and gamma-delta heterodimer associate orthogonally, giving a cruciform conformation. This heterotetramer may covalently dimerizes thanks to the gamma subunit. In terms of tissue distribution, expressed by the venom gland.

Its subcellular location is the secreted. Functionally, potent inhibitor of collagen-induced platelet aggregation. It acts by binding to the integrin alpha2A domain and blocks collagen binding to integrin alpha-2/beta-1 (ITGA2/ITGB1). The gamma/delta subunits mainly contribute to this activity. In Calloselasma rhodostoma (Malayan pit viper), this protein is Snaclec rhodocetin subunit beta.